The chain runs to 378 residues: Odorant receptor 45a (378 aa).

At 1-30 the chain is on the cytoplasmic side; sequence MDASYFAVQRRALEIVGFDPSTPQLSLKHP. A helical transmembrane segment spans residues 31–51; it reads IWAGILILSLISHNWPMVVYA. Residues 52–129 are Extracellular-facing; that stretch reads LQDLSDLTRL…RYVARSFRNA (78 aa). Residues 130–150 form a helical membrane-spanning segment; sequence AYGVICASAIAPMLLGLWGYV. The Cytoplasmic portion of the chain corresponds to 151 to 173; it reads ETGVFTPTTPMEFNFWLDERKPH. Residues 174–194 form a helical membrane-spanning segment; the sequence is FYWPIYVWGVLGVAAAAWLAI. Over 195–197 the chain is Extracellular; sequence ATD. The helical transmembrane segment at 198-218 threads the bilayer; the sequence is TLFSWLTHNVVIQFQLLELVL. Residues 219-249 are Cytoplasmic-facing; the sequence is EEKDLNGGDSRLTGFVSRHRIALDLAKELSS. A helical membrane pass occupies residues 250 to 270; sequence IFGEIVFVKYMLSYLQLCMLA. Over 271-285 the chain is Extracellular; the sequence is FRFSRSGWSAQVPFR. A helical membrane pass occupies residues 286–306; sequence ATFLVAIIIQLSSYCYGGEYI. Over 307-342 the chain is Cytoplasmic; sequence KQQSLAIAQAVYGQINWPEMTPKKRRLWQMVIMRAQ. The chain crosses the membrane as a helical span at residues 343–363; sequence RPAKIFGFMFVVDLPLLLWVI. Over 364 to 378 the chain is Extracellular; that stretch reads RTAGSFLAMLRTFER.

Belongs to the insect chemoreceptor superfamily. Heteromeric odorant receptor channel (TC 1.A.69) family. Or1a subfamily. In terms of assembly, interacts with Orco. Complexes exist early in the endomembrane system in olfactory sensory neurons (OSNs), coupling these complexes to the conserved ciliary trafficking pathway.

It localises to the cell membrane. Functionally, odorant receptor which mediates acceptance or avoidance behavior, depending on its substrates. The odorant receptor repertoire encodes a large collection of odor stimuli that vary widely in identity, intensity, and duration. May form a complex with Orco to form odorant-sensing units, providing sensitive and prolonged odorant signaling and calcium permeability. Involved in the behavioral responses to hexanol, pentyl acetate, benzyl acetate, and 2-heptanone. The sequence is that of Odorant receptor 45a (Or45a) from Drosophila melanogaster (Fruit fly).